The sequence spans 450 residues: Homogentisate 1,2-dioxygenase (450 aa).

H304 serves as the catalytic Proton acceptor. Fe cation contacts are provided by H347 and E353. Y362 and H383 together coordinate homogentisate. H383 contributes to the Fe cation binding site.

It belongs to the homogentisate dioxygenase family. In terms of assembly, hexamer; dimer of trimers. The cofactor is Fe cation.

It carries out the reaction homogentisate + O2 = 4-maleylacetoacetate + H(+). It participates in amino-acid degradation; L-phenylalanine degradation; acetoacetate and fumarate from L-phenylalanine: step 4/6. In terms of biological role, involved in the catabolism of homogentisate (2,5-dihydroxyphenylacetate or 2,5-OH-PhAc), a central intermediate in the degradation of phenylalanine and tyrosine. Catalyzes the oxidative ring cleavage of the aromatic ring of homogentisate to yield maleylacetoacetate. In Burkholderia thailandensis (strain ATCC 700388 / DSM 13276 / CCUG 48851 / CIP 106301 / E264), this protein is Homogentisate 1,2-dioxygenase.